Here is a 177-residue protein sequence, read N- to C-terminus: Translation initiation factor IF-3 (177 aa).

It belongs to the IF-3 family. In terms of assembly, monomer.

Its subcellular location is the cytoplasm. Functionally, IF-3 binds to the 30S ribosomal subunit and shifts the equilibrium between 70S ribosomes and their 50S and 30S subunits in favor of the free subunits, thus enhancing the availability of 30S subunits on which protein synthesis initiation begins. This chain is Translation initiation factor IF-3, found in Synechocystis sp. (strain ATCC 27184 / PCC 6803 / Kazusa).